A 287-amino-acid polypeptide reads, in one-letter code: Bifunctional protein FolD (287 aa).

NADP(+)-binding positions include 167-169 (GRS) and Thr192.

It belongs to the tetrahydrofolate dehydrogenase/cyclohydrolase family. As to quaternary structure, homodimer.

It catalyses the reaction (6R)-5,10-methylene-5,6,7,8-tetrahydrofolate + NADP(+) = (6R)-5,10-methenyltetrahydrofolate + NADPH. The catalysed reaction is (6R)-5,10-methenyltetrahydrofolate + H2O = (6R)-10-formyltetrahydrofolate + H(+). It participates in one-carbon metabolism; tetrahydrofolate interconversion. Functionally, catalyzes the oxidation of 5,10-methylenetetrahydrofolate to 5,10-methenyltetrahydrofolate and then the hydrolysis of 5,10-methenyltetrahydrofolate to 10-formyltetrahydrofolate. In Sorangium cellulosum (strain So ce56) (Polyangium cellulosum (strain So ce56)), this protein is Bifunctional protein FolD.